The chain runs to 341 residues: Zinc finger protein ZIC 4 (341 aa).

The disordered stretch occupies residues 36 to 66; that stretch reads HHGPQLAASSNPSVLPGLHEQPPQASHSRPL. Residues 135–169 form a C2H2-type 1; atypical zinc finger; that stretch reads LICKWLGDDSPMSPRPCSKTFSTMHELVTHVTVEH. The segment at 178 to 205 adopts a C2H2-type 2; atypical zinc-finger fold; sequence HICFWEECPRQGKPFKAKYKLVNHIRVH. 3 consecutive C2H2-type zinc fingers follow at residues 211–235, 241–265, and 271–295; these read FPCP…KRTH, FRCE…SHVH, and YMCK…MKVH. Residues 289-309 form a disordered region; that stretch reads RKHMKVHGRSPPPSSGYDSAI.

This sequence belongs to the GLI C2H2-type zinc-finger protein family. As to expression, exclusively expressed in the cerebellum.

It localises to the nucleus. In terms of biological role, binds to DNA. The chain is Zinc finger protein ZIC 4 (Zic4) from Mus musculus (Mouse).